The chain runs to 667 residues: MADLSSRVNELHDLLNQYSYEYYVEDNPSVPDSEYDKLLHELIKIEEEHPEYKTVDSPTVRVGGEAQASFNKVNHDTPMLSLGNAFNEDDLRKFDQRIREQIGNVEYMCELKIDGLAVSLKYVDGYFVQGLTRGDGTTGEDITENLKTIHAIPLKMKEPLNVEVRGEAYMPRRSFLRLNEEKEKNDEQLFANPRNAAAGSLRQLDSKLTAKRKLSVFIYSVNDFTDFNARSQSEALDELDKLGFTTNKNRARVNNIDGVLEYIEKWTSQRESLPYDIDGIVIKVNDLDQQDEMGFTQKSPRWAIAYKFPAEEVVTKLLDIELSIGRTGVVTPTAILEPVKVAGTTVSRASLHNEDLIHDRDIRIGDSVVVKKAGDIIPEVVRSIPERRPEGAVTYHMPTHCPSCGHELVRIEGEVALRCINPKCQAQLVEGLIHFVSRQAMNIDGLGTKIIQQLYQSELIKDVADIFYLTEEDLLPLDRMGQKKVDNLLAAIQQAKDNSLENLLFGLGIRHLGVKASQVLAEKYETIDRLLTVTEAELVEIHDIGDKVAQSVVTYLENEDIRALIQKLKDKHVNMIYKGIKTSDIEGHPEFSGKTIVLTGKLHQMTRNEASKWLASQGAKVTSSVTKNTDVVIAGEDAGSKLTKAQSLGIEIWTEQQFVDKQNELNS.

NAD(+) is bound by residues aspartate 32 to aspartate 36, serine 81 to leucine 82, and glutamate 110. Lysine 112 serves as the catalytic N6-AMP-lysine intermediate. NAD(+) contacts are provided by arginine 133, glutamate 167, lysine 283, and lysine 307. Residues cysteine 401, cysteine 404, cysteine 419, and cysteine 424 each coordinate Zn(2+). One can recognise a BRCT domain in the interval glutamate 586 to serine 667.

The protein belongs to the NAD-dependent DNA ligase family. LigA subfamily. It depends on Mg(2+) as a cofactor. Requires Mn(2+) as cofactor.

The catalysed reaction is NAD(+) + (deoxyribonucleotide)n-3'-hydroxyl + 5'-phospho-(deoxyribonucleotide)m = (deoxyribonucleotide)n+m + AMP + beta-nicotinamide D-nucleotide.. In terms of biological role, DNA ligase that catalyzes the formation of phosphodiester linkages between 5'-phosphoryl and 3'-hydroxyl groups in double-stranded DNA using NAD as a coenzyme and as the energy source for the reaction. It is essential for DNA replication and repair of damaged DNA. This chain is DNA ligase, found in Staphylococcus aureus (strain bovine RF122 / ET3-1).